Reading from the N-terminus, the 77-residue chain is SS18-like protein 2 (77 aa).

The SH2-binding signature appears at 50-53 (YQHV).

The protein belongs to the SS18 family.

The protein is SS18-like protein 2 (SS18L2) of Homo sapiens (Human).